Reading from the N-terminus, the 379-residue chain is Cytochrome b (379 aa).

Helical transmembrane passes span 33–53, 77–98, 113–133, and 178–198; these read FGSL…FLAM, WLIR…YLHI, WNIG…GYVL, and FFAF…IHLL. Heme b contacts are provided by His83 and His97. Heme b is bound by residues His182 and His196. His201 provides a ligand contact to a ubiquinone. 4 helical membrane passes run 226–246, 288–308, 320–340, and 347–367; these read YKDL…ALFY, LGGV…PILH, ASQL…WIGG, and YIII…VLNP.

This sequence belongs to the cytochrome b family. The cytochrome bc1 complex contains 3 respiratory subunits (MT-CYB, CYC1 and UQCRFS1), 2 core proteins (UQCRC1 and UQCRC2) and probably 6 low-molecular weight proteins. Requires heme b as cofactor.

It is found in the mitochondrion inner membrane. In terms of biological role, component of the ubiquinol-cytochrome c reductase complex (complex III or cytochrome b-c1 complex) that is part of the mitochondrial respiratory chain. The b-c1 complex mediates electron transfer from ubiquinol to cytochrome c. Contributes to the generation of a proton gradient across the mitochondrial membrane that is then used for ATP synthesis. This chain is Cytochrome b (mt-cyb), found in Anguilla dieffenbachii (New Zealand longfin eel).